The sequence spans 242 residues: MAGHSKWANIQHRKGRQDEKRGKIWTRLIKEITVAARMGGGDIAANPRLRLAVDKAADANMPKDNVTRAIQRGSGGLEGVNYEEIRYEGYGINGAAILVDCMTDNRVRTVAEVRHAFSKFGGNMGTEGSVAFLFKHCGQFFFAPGTDEDKLMEAALEAGAEDVTTDEEGGIEVICPPHDFSAVKDALAAAGFKAELAEVVMKPATETVFEGDDAVKMQKLLDALENLDDVQEVFTNAVIEQA.

The protein belongs to the TACO1 family.

It is found in the cytoplasm. This chain is Probable transcriptional regulatory protein HEAR0561, found in Herminiimonas arsenicoxydans.